We begin with the raw amino-acid sequence, 196 residues long: SAGA-associated factor 11 homolog (196 aa).

Residues 1–22 (MSAANMPTTTGAQGSGNQVPTT) are disordered. Residues 106–127 (CTCPNCDRLVAAARFAPHLEKC) form an SGF11-type zinc finger. The interval 144 to 196 (TKEGATSAHLHSAGNTGGTDDEDDVDWSSDKRRKKSNQNSRNNGSKKNNGKSF) is disordered. Phosphoserine is present on serine 172. Residues 180-196 (NQNSRNNGSKKNNGKSF) are compositionally biased toward low complexity.

Belongs to the SGF11 family. In terms of assembly, component of some SAGA transcription coactivator-HAT complexes, at least composed of Ada2b, not/nonstop, Pcaf/Gcn5, Sgf11 and Spt3. Within the SAGA complex, Sgf11, e(y)2, and not/nonstop form an additional subcomplex of SAGA called the DUB module (deubiquitination module). Interacts directly with not/nonstop. Interacts with the AMEX complex component xmas-2. Interacts with Cbp80; important for promoter recruitment of Sgf11 that is not associated with the DUB module.

It is found in the nucleus. The protein resides in the nucleoplasm. It localises to the cytoplasm. Its function is as follows. Component of the transcription regulatory histone acetylation (HAT) complex SAGA, a multiprotein complex that activates transcription by remodeling chromatin and mediating histone acetylation and deubiquitination. Within the SAGA complex, participates in a subcomplex that specifically deubiquitinates histone H2B. The SAGA complex is recruited to specific gene promoters by activators, where it is required for transcription. Required for nuclear receptor-mediated transactivation. Binds independently on SAGA to promoters in an RNA-dependent manner. Binds to mRNA and is essential for total mRNA export from the nucleus. Required to counteract heterochromatin silencing. Controls the development of neuronal connectivity in visual system by being required for accurate axon targeting in the optic lobe. Required for expression of ecdysone-induced genes such as br/broad. The chain is SAGA-associated factor 11 homolog from Drosophila erecta (Fruit fly).